Reading from the N-terminus, the 369-residue chain is Biglycan (369 aa).

The first 16 residues, 1 to 16 (MWPLWPLAALLALSQA), serve as a signal peptide directing secretion. Positions 17-37 (LPFEQKAFWDFTLDDGLPMLN) are excised as a propeptide. O-linked (Xyl...) (glycosaminoglycan) serine glycosylation is found at serine 42 and serine 48. Cystine bridges form between cysteine 64-cysteine 70 and cysteine 68-cysteine 77. 12 LRR repeats span residues 83–103 (KAVP…NNDI), 104–127 (SELR…NNKI), 128–151 (SKIH…KNHL), 152–172 (VEIP…DNRI), 173–196 (RKVP…GNPL), 197–221 (ENSG…EAKL), 222–242 (TGIP…HNKI), 243–266 (QAIE…HNQI), 267–290 (RMIE…NNKL), 291–313 (SRVP…TNNI), 314–343 (TKVG…NNPV), and 344–369 (PYWE…NYKK). O-linked (Xyl...) (glycosaminoglycan) serine glycans are attached at residues serine 181 and serine 199. Asparagine 271 and asparagine 312 each carry an N-linked (GlcNAc...) asparagine glycan. Residues cysteine 322 and cysteine 355 are joined by a disulfide bond.

Belongs to the small leucine-rich proteoglycan (SLRP) family. SLRP class I subfamily. Homodimer. Forms a ternary complex with MFAP2 and ELN. The two attached glycosaminoglycan chains can be either chondroitin sulfate or dermatan sulfate. In terms of tissue distribution, found in several connective tissues, especially in articular cartilages.

The protein localises to the secreted. It localises to the extracellular space. Its subcellular location is the extracellular matrix. May be involved in collagen fiber assembly. This is Biglycan (BGN) from Bos taurus (Bovine).